An 860-amino-acid chain; its full sequence is Leucine--tRNA ligase (860 aa).

Residues 42–52 (PYPSGRLHMGH) carry the 'HIGH' region motif. The short motif at 619 to 623 (KMSKS) is the 'KMSKS' region element. Residue lysine 622 participates in ATP binding.

The protein belongs to the class-I aminoacyl-tRNA synthetase family.

It localises to the cytoplasm. It catalyses the reaction tRNA(Leu) + L-leucine + ATP = L-leucyl-tRNA(Leu) + AMP + diphosphate. The sequence is that of Leucine--tRNA ligase from Shigella boydii serotype 18 (strain CDC 3083-94 / BS512).